We begin with the raw amino-acid sequence, 870 residues long: Dynamin-2 (870 aa).

The Dynamin-type G domain occupies His-28 to Pro-294. The interval Gly-38–Ser-45 is G1 motif. The GDP site is built by Ser-41, Gly-43, Lys-44, Ser-45, Ser-46, Arg-59, and Gly-60. A G2 motif region spans residues Val-64–Arg-66. A G3 motif region spans residues Asp-136–Gly-139. Residues Thr-205–Asp-208 form a G4 motif region. Residues Lys-206, Asp-208, and Asp-211 each coordinate GDP. Residue Tyr-231 is modified to Phosphotyrosine. The G5 motif stretch occupies residues Val-235–Ser-238. GDP is bound by residues Asn-236, Arg-237, and Gln-239. N6-acetyllysine is present on Lys-299. Positions Leu-519 to Val-625 constitute a PH domain. Position 597 is a phosphotyrosine (Tyr-597). Lys-598 bears the N6-acetyllysine mark. The GED domain occupies Val-653 to Val-744. A disordered region spans residues Thr-741 to Asp-870. The residue at position 755 (Thr-755) is a Phosphothreonine. Residues Trp-756–Pro-767 are compositionally biased toward polar residues. At Ser-764 the chain carries Phosphoserine; by CDK1. The segment covering Ser-826–Val-846 has biased composition (pro residues). The segment covering Pro-847–Ala-864 has biased composition (low complexity).

It belongs to the TRAFAC class dynamin-like GTPase superfamily. Dynamin/Fzo/YdjA family. As to quaternary structure, oligomerizes into a helical polymer that self-assembles around the vesicle membrane, when associated to the menbrane through lipid binding. Interacts with SHANK1 and SHANK2. Interacts with SNX9. Interacts (via C-terminal proline-rich domain (PRD)) with SNX18 (via SH3 domain); this interaction regulates ATG9A and ATG16L1 trafficking from recycling endosomes to sites of autophagosome formation. Interacts with SNX33 (via SH3 domain). Interacts with PSTPIP1 (via SH3 domain). Interacts with CTNND2. Interacts (via C-terminal proline-rich domain (PRD)) with BIN1 (via SH3 domain); this interaction allows the recruitment of DNM2 to the membrane tubules and inhibits self-assembly-stimulated GTPase activity on the membrane. Interacts with GABARAP, GABARAPL1 and GABARAPL2. Interacts with MAP1LC3B (the lipidate and non-lipidated LC3 form); this interaction mediates recycling endosome scission leading to autophagosome release. Interacts with ITSN1. Interacts with MYOF. May interact with PIK3C3. May be a component of a complex composed of RAB5A (in GDP-bound form), DYN2 and PIK3C3. Interacts with SDC4; this interaction is markedly enhanced at focal ahesion site upon induction of focal adhesions and stress-fiber formation. Interacts with ACTN1. Interacts with CTTN; this interaction stimulates the intrinsic GTPase activity of DNM2 and stabilizes the association of DNM2 and actin filaments; in addition this interaction is stimulated by ligand binding to the receptor, leading to the recruitment of the DNM2-CTTN complex to the sequestered receptor-ligand complex to its internalization. Interacts with NOSTRIN (via SH3 domain); this interaction allows the recruitment of NOS3 to dynamin-positive structures. Interacts (via C-terminal proline-rich domain (PRD)) with SH3BP4 (via SH3 domain); this interaction controls the GTPase activity and is prevented by EGFR-induced tyrosine phosphorylation of either DNM2 or SH3BP4. Interacts with MYO1E (via SH3 domain). Interacts with TUBG1; this interaction may participate in centrosome cohesion. In terms of processing, phosphorylation at Ser-848 by GSK3-alpha relieves the inhibition of BIN1 and promotes endocytosis. Phosphorylation at Ser-764 by CDK1 is greatly increased upon mitotic entry. It regulates cytokinesis downstream of calcineurin, and does not affect clathrin-mediated endocytosis. Dephosphorylated by calcineurin/PP2 during cytokinesis in a Ca(2+)- and calmodulin-dependent manner. Phosphorylated on tyrosine residues by EGFR. Phosphorylated on tyrosine residues after activation of SRC. As to expression, ubiquitously expressed. Brain expression is restricted to glial cells and fibroblasts. Highest levels in the testis.

It localises to the cytoplasm. The protein localises to the cytoskeleton. Its subcellular location is the cytoplasmic vesicle. The protein resides in the clathrin-coated vesicle. It is found in the cell projection. It localises to the uropodium. The protein localises to the endosome. Its subcellular location is the microtubule organizing center. The protein resides in the centrosome. It is found in the centriole. It localises to the recycling endosome. The protein localises to the phagocytic cup. Its subcellular location is the phagosome membrane. The protein resides in the podosome. It is found in the cell junction. It localises to the postsynaptic density. The protein localises to the synapse. Its subcellular location is the synaptosome. The protein resides in the midbody. It is found in the membrane. It localises to the clathrin-coated pit. The protein localises to the cell membrane. The enzyme catalyses GTP + H2O = GDP + phosphate + H(+). In terms of biological role, catalyzes the hydrolysis of GTP and utilizes this energy to mediate vesicle scission at plasma membrane during endocytosis and filament remodeling at many actin structures during organization of the actin cytoskeleton. Plays an important role in vesicular trafficking processes, namely clathrin-mediated endocytosis (CME), exocytic and clathrin-coated vesicle from the trans-Golgi network, and PDGF stimulated macropinocytosis. During vesicular trafficking process, associates to the membrane, through lipid binding, and self-assembles into ring-like structure through oligomerization to form a helical polymer around the vesicle membrane and leading to vesicle scission. Plays a role in organization of the actin cytoskeleton by mediating arrangement of stress fibers and actin bundles in podocytes. During organization of the actin cytoskeleton, self-assembles into ring-like structure that directly bundles actin filaments to form typical membrane tubules decorated with dynamin spiral polymers. Self-assembly increases GTPase activity and the GTP hydrolysis causes the rapid depolymerization of dynamin spiral polymers, and results in dispersion of actin bundles. Remodels, through its interaction with CTTN, bundled actin filaments in a GTPase-dependent manner and plays a role in orchestrating the global actomyosin cytoskeleton. The interaction with CTTN stabilizes the interaction of DNM2 and actin filaments and stimulates the intrinsic GTPase activity that results in actin filament-barbed ends and increases the sensitivity of filaments in bundles to the actin depolymerizing factor, CFL1. Plays a role in the autophagy process, by participating in the formation of ATG9A vesicles destined for the autophagosomes through its interaction with SNX18, by mediating recycling endosome scission leading to autophagosome release through MAP1LC3B interaction and by regulating maturation of apoptotic cell corpse-containing phagosomes by recruiting PIK3C3 to the phagosome membrane. Also plays a role in cytokinesis. May participate in centrosome cohesion through its interaction with TUBG1. Plays a role in the regulation of neuron morphology, axon growth and formation of neuronal growth cones. Involved in membrane tubulation. In Rattus norvegicus (Rat), this protein is Dynamin-2.